Consider the following 240-residue polypeptide: Transcriptional activator protein VanR (240 aa).

In terms of domain architecture, HTH luxR-type spans Asp169 to Gly234. Residues Ala193 to Ser212 constitute a DNA-binding region (H-T-H motif).

It belongs to the autoinducer-regulated transcriptional regulatory protein family.

Probable transcriptional activator. Binds to autoinducer molecule ODHL. The protein is Transcriptional activator protein VanR (vanR) of Vibrio anguillarum (Listonella anguillarum).